Reading from the N-terminus, the 505-residue chain is ATP synthase subunit alpha, cyanelle (505 aa).

170–177 (GDRQTGKT) lines the ATP pocket.

Belongs to the ATPase alpha/beta chains family. F-type ATPases have 2 components, CF(1) - the catalytic core - and CF(0) - the membrane proton channel. CF(1) has five subunits: alpha(3), beta(3), gamma(1), delta(1), epsilon(1). CF(0) has four main subunits: a, b, b' and c.

The protein resides in the plastid. It localises to the cyanelle thylakoid membrane. It catalyses the reaction ATP + H2O + 4 H(+)(in) = ADP + phosphate + 5 H(+)(out). Produces ATP from ADP in the presence of a proton gradient across the membrane. The alpha chain is a regulatory subunit. The chain is ATP synthase subunit alpha, cyanelle from Cyanophora paradoxa.